The primary structure comprises 93 residues: Small ribosomal subunit protein bS20 (93 aa).

Positions 1-11 (MPQHKSAEKRV) are enriched in basic and acidic residues. The segment at 1-23 (MPQHKSAEKRVRQSKRRNARNRV) is disordered. The segment covering 12 to 23 (RQSKRRNARNRV) has biased composition (basic residues).

Belongs to the bacterial ribosomal protein bS20 family.

Binds directly to 16S ribosomal RNA. This chain is Small ribosomal subunit protein bS20, found in Chloroherpeton thalassium (strain ATCC 35110 / GB-78).